Here is an 86-residue protein sequence, read N- to C-terminus: Putative defensin-like protein 211 (86 aa).

The N-terminal stretch at methionine 1 to serine 19 is a signal peptide. 3 disulfide bridges follow: cysteine 55–cysteine 72, cysteine 58–cysteine 77, and cysteine 62–cysteine 79.

It belongs to the DEFL family.

It localises to the secreted. In Arabidopsis thaliana (Mouse-ear cress), this protein is Putative defensin-like protein 211.